We begin with the raw amino-acid sequence, 166 residues long: Phosphopantetheine adenylyltransferase (166 aa).

Position 8 (S8) interacts with substrate. ATP is bound by residues 8–9 and H16; that span reads SF. Substrate is bound by residues K40, T72, and R86. ATP-binding positions include 87-89, E97, and 122-128; these read GLR and YSFLSSS.

It belongs to the bacterial CoaD family. In terms of assembly, homohexamer. The cofactor is Mg(2+).

The protein resides in the cytoplasm. The enzyme catalyses (R)-4'-phosphopantetheine + ATP + H(+) = 3'-dephospho-CoA + diphosphate. Its pathway is cofactor biosynthesis; coenzyme A biosynthesis; CoA from (R)-pantothenate: step 4/5. Functionally, reversibly transfers an adenylyl group from ATP to 4'-phosphopantetheine, yielding dephospho-CoA (dPCoA) and pyrophosphate. The chain is Phosphopantetheine adenylyltransferase from Synechococcus elongatus (strain ATCC 33912 / PCC 7942 / FACHB-805) (Anacystis nidulans R2).